We begin with the raw amino-acid sequence, 194 residues long: UPF0301 protein FTM_0963 (194 aa).

Belongs to the UPF0301 (AlgH) family.

This is UPF0301 protein FTM_0963 from Francisella tularensis subsp. mediasiatica (strain FSC147).